The sequence spans 480 residues: Aspartyl/glutamyl-tRNA(Asn/Gln) amidotransferase subunit B (480 aa).

Belongs to the GatB/GatE family. GatB subfamily. Heterotrimer of A, B and C subunits.

It carries out the reaction L-glutamyl-tRNA(Gln) + L-glutamine + ATP + H2O = L-glutaminyl-tRNA(Gln) + L-glutamate + ADP + phosphate + H(+). The enzyme catalyses L-aspartyl-tRNA(Asn) + L-glutamine + ATP + H2O = L-asparaginyl-tRNA(Asn) + L-glutamate + ADP + phosphate + 2 H(+). In terms of biological role, allows the formation of correctly charged Asn-tRNA(Asn) or Gln-tRNA(Gln) through the transamidation of misacylated Asp-tRNA(Asn) or Glu-tRNA(Gln) in organisms which lack either or both of asparaginyl-tRNA or glutaminyl-tRNA synthetases. The reaction takes place in the presence of glutamine and ATP through an activated phospho-Asp-tRNA(Asn) or phospho-Glu-tRNA(Gln). This is Aspartyl/glutamyl-tRNA(Asn/Gln) amidotransferase subunit B from Streptococcus pneumoniae serotype 4 (strain ATCC BAA-334 / TIGR4).